Reading from the N-terminus, the 368-residue chain is F-box/kelch-repeat protein At5g51250 (368 aa).

The F-box domain occupies 1–44 (MSSLPDDLLLSIFARISRLYYPTLSLVSKSFRSLLASPDLYKAR). Kelch repeat units lie at residues 116–163 (DIYN…VLDR), 165–218 (IYVA…CIDG), and 260–304 (LFYI…YGGK).

The protein is F-box/kelch-repeat protein At5g51250 of Arabidopsis thaliana (Mouse-ear cress).